The sequence spans 430 residues: MAGVVVVGAQWGDEGKGKIVDWLSSRADVVVRFQGGHNAGHTLVIDGKVFKLALLPSGLVRGGKLSVIGNGVVVDPWHMLTEIEGIQAQGIEVSPESLVLADNASLILPWHKDIDAAREGALGAAQIGTTKRGIGPAYEDRVGRRAIRVADLADPAALDLKIERLLAHHRPLRAGLDLPEPDGAALKAALLEIAPQVLAYAQPVWKLLDEKVRRGSRILFEGAQGVMLDVDHGTYPFVTSSSVVAGNASAGSGVGPGAISYVLGLAKAYTTRVGAGPFPTEQDNDIGKRLGTVGHEFGTNTGRARRCGWFDSVMVRQACATSGVTGLALTKLDVLDGFEEIKICTAYKLNGKTIDYFPAGLTDQAAVEPVYETLKGWSGSTRGARSWTDLPPEAVVYVRRLEELVGKPCALVSTSPEREDVILMRDPFEG.

GTP is bound by residues 12–18 (GDEGKGK) and 40–42 (GHT). Asp-13 (proton acceptor) is an active-site residue. Residues Asp-13 and Gly-40 each contribute to the Mg(2+) site. IMP is bound by residues 13–16 (DEGK), 38–41 (NAGH), Thr-130, Arg-144, Gln-224, Thr-239, and Arg-303. His-41 (proton donor) is an active-site residue. 299-305 (TNTGRAR) contributes to the substrate binding site. GTP-binding positions include Arg-305, 331–333 (KLD), and 413–415 (STS).

Belongs to the adenylosuccinate synthetase family. In terms of assembly, homodimer. Requires Mg(2+) as cofactor.

The protein resides in the cytoplasm. The enzyme catalyses IMP + L-aspartate + GTP = N(6)-(1,2-dicarboxyethyl)-AMP + GDP + phosphate + 2 H(+). The protein operates within purine metabolism; AMP biosynthesis via de novo pathway; AMP from IMP: step 1/2. Plays an important role in the de novo pathway of purine nucleotide biosynthesis. Catalyzes the first committed step in the biosynthesis of AMP from IMP. This Hyphomonas neptunium (strain ATCC 15444) protein is Adenylosuccinate synthetase.